A 624-amino-acid polypeptide reads, in one-letter code: Pentatricopeptide repeat-containing protein At2g32630 (624 aa).

13 PPR repeats span residues Phe-153 to Ile-187, Asp-188 to Ile-222, Thr-223 to Pro-257, Glu-258 to Tyr-292, Asn-293 to Ser-327, Asp-328 to Pro-362, Ser-363 to Ile-397, Thr-398 to Ala-432, Asp-433 to Leu-467, Ser-468 to Pro-502, Asn-503 to Pro-537, Asp-538 to Gln-572, and Asn-573 to Ile-607.

The protein belongs to the PPR family. P subfamily.

This Arabidopsis thaliana (Mouse-ear cress) protein is Pentatricopeptide repeat-containing protein At2g32630.